The following is a 419-amino-acid chain: UDP-N-acetylglucosamine 1-carboxyvinyltransferase (419 aa).

Residue 22–23 (KN) participates in phosphoenolpyruvate binding. Position 91 (R91) interacts with UDP-N-acetyl-alpha-D-glucosamine. The active-site Proton donor is the C115. C115 carries the 2-(S-cysteinyl)pyruvic acid O-phosphothioketal modification. UDP-N-acetyl-alpha-D-glucosamine is bound by residues 120 to 124 (RPVDL), 160 to 163 (KVSV), D305, and V327.

Belongs to the EPSP synthase family. MurA subfamily.

The protein resides in the cytoplasm. It catalyses the reaction phosphoenolpyruvate + UDP-N-acetyl-alpha-D-glucosamine = UDP-N-acetyl-3-O-(1-carboxyvinyl)-alpha-D-glucosamine + phosphate. The protein operates within cell wall biogenesis; peptidoglycan biosynthesis. Functionally, cell wall formation. Adds enolpyruvyl to UDP-N-acetylglucosamine. The protein is UDP-N-acetylglucosamine 1-carboxyvinyltransferase of Salmonella agona (strain SL483).